The following is a 130-amino-acid chain: UPF0102 protein BT_1882 (130 aa).

The protein belongs to the UPF0102 family.

The sequence is that of UPF0102 protein BT_1882 from Bartonella tribocorum (strain CIP 105476 / IBS 506).